The sequence spans 157 residues: Small ribosomal subunit protein uS7 (157 aa).

Belongs to the universal ribosomal protein uS7 family. As to quaternary structure, part of the 30S ribosomal subunit. Contacts proteins S9 and S11.

Its function is as follows. One of the primary rRNA binding proteins, it binds directly to 16S rRNA where it nucleates assembly of the head domain of the 30S subunit. Is located at the subunit interface close to the decoding center, probably blocks exit of the E-site tRNA. The chain is Small ribosomal subunit protein uS7 from Eikenella corrodens.